Consider the following 397-residue polypeptide: MSLWKKTLYKSVCLALALLVAVTVFQRSVTPGQFLQDPLPPTPGPAKTGNLVNPNSFWKSSKDVAAPTPTVPRGPQVWDVITTNCSININLTHQPWFQSLEPHFRQFLAYRHCRYFPMLLNHPEKCAGDVYMLVVVKSVITQHDRREVIRQTWGHEWESAGLGRGAVRTLFLLGTASKQEERTHYQQLLAYEDRLYADILQWDFLDSFFNLTLKEIHFLKWLDIYCPNVPFVFKGDDDVFVNPTNLLEFLSDRQPQENLFVGDVLKHARPIRKKDNKYYIPAVMYGKATYPPYAGGGGFLMSGSLARQLHHACDTLELFPIDDVFLGMCLEVLGVKPTGHEGFKTFGISRVRSSRMNKEPCFYRAMLVVHKLLPAELLAMWDLVHSNLTCSVKFQVL.

At 1-6 (MSLWKK) the chain is on the cytoplasmic side. Residues 7–26 (TLYKSVCLALALLVAVTVFQ) form a helical membrane-spanning segment. The Lumenal segment spans residues 27 to 397 (RSVTPGQFLQ…LTCSVKFQVL (371 aa)). Residues N84, N90, N210, and N387 are each glycosylated (N-linked (GlcNAc...) asparagine).

Belongs to the glycosyltransferase 31 family. In terms of tissue distribution, strongly expressed in placenta and colon. Moderately expressed in lung, stomach, small intestine and kidney. Very weakly expressed in cerebrum, cerebellum, heart and testis.

The protein localises to the golgi apparatus membrane. It participates in protein modification; protein glycosylation. N-acetyl glucosamine (GlcNAc) transferase that catalyzes the transfer of GlcNAc via a beta1-&gt;3 linkage from UDP-GlcNAc to the non-reducing terminal galactose (Gal) in the linearly growing chain of N- and O-linked keratan sulfate proteoglycans. Cooperates with B4GALT4 galactosyltransferase and CHST6 and CHST1 sulfotransferases to construct and elongate mono- and disulfated disaccharide units [-&gt;3Galbeta1-&gt;4(6-sulfoGlcNAcbeta)1-&gt;] and [-&gt;3(6-sulfoGalbeta)1-&gt;4(6-sulfoGlcNAcbeta)1-&gt;] within keratan sulfate polymer. Involved in biosynthesis of N-linked keratan sulfate proteoglycans in cornea, with an impact on proteoglycan fibril organization and corneal transparency. May play a role in the maintenance of tissue architecture by suppressing cellular motility and invasion. The sequence is that of UDP-GlcNAc:betaGal beta-1,3-N-acetylglucosaminyltransferase 7 (B3gnt7) from Mus musculus (Mouse).